The chain runs to 464 residues: Glutamate decarboxylase (464 aa).

Lys-274 carries the post-translational modification N6-(pyridoxal phosphate)lysine.

The protein belongs to the group II decarboxylase family. It depends on pyridoxal 5'-phosphate as a cofactor.

It catalyses the reaction L-glutamate + H(+) = 4-aminobutanoate + CO2. In terms of biological role, catalyzes the pyridoxal-dependent decarboxylation of glutamate to produce 4-aminobutanoate. Has weak activity with aspartate, but cannot complement an E.coli panD deletion mutant. The chain is Glutamate decarboxylase from Aliivibrio fischeri (strain ATCC 700601 / ES114) (Vibrio fischeri).